The sequence spans 256 residues: Probable ATP-dependent transporter slr0075 (256 aa).

An ABC transporter domain is found at 6-250 (LSIKNLTASV…EEKGYDFLDE (245 aa)). 38-45 (GRNGSGKS) provides a ligand contact to ATP.

It belongs to the ABC transporter superfamily. Ycf16 family.

This is Probable ATP-dependent transporter slr0075 from Synechocystis sp. (strain ATCC 27184 / PCC 6803 / Kazusa).